Reading from the N-terminus, the 377-residue chain is Heat stress transcription factor B-2b (377 aa).

The disordered stretch occupies residues 1–56 (MPGEQTGETPTVAGVGGGGAGCSAGNSGGSSGCGAGGGGGGSGGGGGGGGDSQRSI). The segment covering 14-51 (GVGGGGAGCSAGNSGGSSGCGAGGGGGGSGGGGGGGGD) has biased composition (gly residues). Residues 57-151 (PTPFLTKTYQ…LLRDIQRRKI (95 aa)) mediate DNA binding. The tract at residues 220-265 (TTSCTTAPELVEENERLRKDNERLRKEMTKLKGLYANIYTLMANFT) is hydrophobic repeat HR-A/B. The Nuclear localization signal motif lies at 323-327 (KRARR). The segment at 326–377 (RREEELGAAEEEDDDRREAAAQEGEQSSDVKAEPMEENNSGNHNGSWLELGK) is disordered. The segment covering 331 to 340 (LGAAEEEDDD) has biased composition (acidic residues).

Belongs to the HSF family. Class B subfamily. In terms of assembly, homotrimer. In terms of processing, exhibits temperature-dependent phosphorylation.

It localises to the nucleus. Functionally, transcriptional regulator that specifically binds DNA sequence 5'-AGAAnnTTCT-3' known as heat shock promoter elements (HSE). This Arabidopsis thaliana (Mouse-ear cress) protein is Heat stress transcription factor B-2b (HSFB2B).